The following is a 112-amino-acid chain: Large ribosomal subunit protein eL30 (112 aa).

This sequence belongs to the eukaryotic ribosomal protein eL30 family.

The chain is Large ribosomal subunit protein eL30 (RPL30) from Zea mays (Maize).